A 223-amino-acid polypeptide reads, in one-letter code: Small ribosomal subunit protein uS3 (223 aa).

Residues 39 to 107 (VREFLHKKLA…PVQINIEEVR (69 aa)) form the KH type-2 domain.

It belongs to the universal ribosomal protein uS3 family. Part of the 30S ribosomal subunit. Forms a tight complex with proteins S10 and S14.

Its function is as follows. Binds the lower part of the 30S subunit head. Binds mRNA in the 70S ribosome, positioning it for translation. The sequence is that of Small ribosomal subunit protein uS3 from Francisella tularensis subsp. novicida (strain U112).